A 1095-amino-acid polypeptide reads, in one-letter code: Mediator of RNA polymerase II transcription subunit 15 (1095 aa).

Residues 66–83 (KSKIDAMRSTRDKRKRES) are compositionally biased toward basic and acidic residues. 6 disordered regions span residues 66–197 (KSKI…LTQQ), 265–323 (QQQQ…RNPN), 448–508 (SAAD…LNPT), 633–672 (QQQQQQGMDPNRAQNSQQQQQQNQANMQQARNRKPTKNQT), 737–847 (PTMA…QPGN), and 1050–1075 (SEAAKGTNNSSLMDSGKEGSCKSMAG). Low complexity-rich tracts occupy residues 99–113 (NNNNNNNNNNNNNLN) and 133–154 (NSNANTNLNTNVGPGVNGPNGN). Residues 155-165 (DGTANPQMFMN) show a composition bias toward polar residues. Positions 166–178 (QQAQARQQAAARQ) are enriched in low complexity. Residues 448–473 (SAADSTMNNSNQPMNIGNNGVNMIPN) are compositionally biased toward polar residues. Low complexity-rich tracts occupy residues 487 to 500 (QTPQQPQQRIQSNR), 633 to 662 (QQQQQQGMDPNRAQNSQQQQQQNQANMQQA), and 780 to 793 (PTPQVVPATVPSTT). Polar residues-rich tracts occupy residues 794–810 (NLSAAGTPNIRNKSATP), 817–847 (PKSTIRSNSNTALASAKTPSPMTVSIPQPGN), and 1050–1062 (SEAAKGTNNSSLM).

Belongs to the Mediator complex subunit 15 family. As to quaternary structure, component of the Mediator complex.

It is found in the nucleus. Its function is as follows. Component of the Mediator complex, a coactivator involved in regulated gene transcription of nearly all RNA polymerase II-dependent genes. Mediator functions as a bridge to convey information from gene-specific regulatory proteins to the basal RNA polymerase II transcription machinery. Mediator is recruited to promoters by direct interactions with regulatory proteins and serves as a scaffold for the assembly of a functional preinitiation complex with RNA polymerase II and the general transcription factors. This is Mediator of RNA polymerase II transcription subunit 15 (GAL11) from Candida glabrata (strain ATCC 2001 / BCRC 20586 / JCM 3761 / NBRC 0622 / NRRL Y-65 / CBS 138) (Yeast).